We begin with the raw amino-acid sequence, 315 residues long: Acetyl-coenzyme A carboxylase carboxyl transferase subunit beta, chloroplastic (315 aa).

In terms of domain architecture, CoA carboxyltransferase N-terminal spans 47-315 (LWTRCDSCEN…VYKESNSYLF (269 aa)). 4 residues coordinate Zn(2+): cysteine 51, cysteine 54, cysteine 70, and cysteine 73. The segment at 51-73 (CDSCENMLYVRFLKQNKRICEEC) adopts a C4-type zinc-finger fold.

The protein belongs to the AccD/PCCB family. In terms of assembly, acetyl-CoA carboxylase is a heterohexamer composed of biotin carboxyl carrier protein, biotin carboxylase and 2 subunits each of ACCase subunit alpha and ACCase plastid-coded subunit beta (accD). The cofactor is Zn(2+).

It is found in the plastid. The protein localises to the chloroplast stroma. The catalysed reaction is N(6)-carboxybiotinyl-L-lysyl-[protein] + acetyl-CoA = N(6)-biotinyl-L-lysyl-[protein] + malonyl-CoA. It participates in lipid metabolism; malonyl-CoA biosynthesis; malonyl-CoA from acetyl-CoA: step 1/1. Component of the acetyl coenzyme A carboxylase (ACC) complex. Biotin carboxylase (BC) catalyzes the carboxylation of biotin on its carrier protein (BCCP) and then the CO(2) group is transferred by the transcarboxylase to acetyl-CoA to form malonyl-CoA. In Physcomitrium patens (Spreading-leaved earth moss), this protein is Acetyl-coenzyme A carboxylase carboxyl transferase subunit beta, chloroplastic.